Reading from the N-terminus, the 552-residue chain is Lysine--tRNA ligase (552 aa).

The short motif at 71–79 (PSGLPHLGT) is the 'HIGH' region element. The 'KMSKS' region signature appears at 319-323 (KISKS). ATP is bound at residue K322.

The protein belongs to the class-I aminoacyl-tRNA synthetase family.

It localises to the cytoplasm. It carries out the reaction tRNA(Lys) + L-lysine + ATP = L-lysyl-tRNA(Lys) + AMP + diphosphate. The sequence is that of Lysine--tRNA ligase from Caulobacter sp. (strain K31).